The chain runs to 145 residues: 3-hydroxyacyl-[acyl-carrier-protein] dehydratase FabZ (145 aa).

The active site involves His-47.

Belongs to the thioester dehydratase family. FabZ subfamily.

The protein resides in the cytoplasm. It catalyses the reaction a (3R)-hydroxyacyl-[ACP] = a (2E)-enoyl-[ACP] + H2O. Involved in unsaturated fatty acids biosynthesis. Catalyzes the dehydration of short chain beta-hydroxyacyl-ACPs and long chain saturated and unsaturated beta-hydroxyacyl-ACPs. This chain is 3-hydroxyacyl-[acyl-carrier-protein] dehydratase FabZ, found in Chromohalobacter salexigens (strain ATCC BAA-138 / DSM 3043 / CIP 106854 / NCIMB 13768 / 1H11).